The chain runs to 156 residues: Endoribonuclease YbeY (156 aa).

Positions 115, 119, and 125 each coordinate Zn(2+).

Belongs to the endoribonuclease YbeY family. Requires Zn(2+) as cofactor.

It is found in the cytoplasm. Functionally, single strand-specific metallo-endoribonuclease involved in late-stage 70S ribosome quality control and in maturation of the 3' terminus of the 16S rRNA. This is Endoribonuclease YbeY from Mannheimia succiniciproducens (strain KCTC 0769BP / MBEL55E).